Reading from the N-terminus, the 269-residue chain is 3-methyl-2-oxobutanoate hydroxymethyltransferase (269 aa).

Mg(2+) contacts are provided by D50 and D89. 3-methyl-2-oxobutanoate is bound by residues D50 to S51, D89, and K119. Position 121 (E121) interacts with Mg(2+). The Proton acceptor role is filled by E187.

The protein belongs to the PanB family. Homodecamer; pentamer of dimers. Requires Mg(2+) as cofactor.

The protein localises to the cytoplasm. The enzyme catalyses 3-methyl-2-oxobutanoate + (6R)-5,10-methylene-5,6,7,8-tetrahydrofolate + H2O = 2-dehydropantoate + (6S)-5,6,7,8-tetrahydrofolate. Its pathway is cofactor biosynthesis; (R)-pantothenate biosynthesis; (R)-pantoate from 3-methyl-2-oxobutanoate: step 1/2. Catalyzes the reversible reaction in which hydroxymethyl group from 5,10-methylenetetrahydrofolate is transferred onto alpha-ketoisovalerate to form ketopantoate. The protein is 3-methyl-2-oxobutanoate hydroxymethyltransferase of Corynebacterium efficiens (strain DSM 44549 / YS-314 / AJ 12310 / JCM 11189 / NBRC 100395).